Reading from the N-terminus, the 603-residue chain is NADPH-dependent diflavin oxidoreductase 1 (603 aa).

One can recognise a Flavodoxin-like domain in the interval 8–152 (VLVLYGSETG…SFVRWTGRLY (145 aa)). Residues 14-19 (SETGNA), 61-64 (STTG), 99-108 (LGDSTYLKFN), and E134 contribute to the FMN site. The 248-residue stretch at 210 to 457 (PDGWTATLVG…RKPVLSPIHG (248 aa)) folds into the FAD-binding FR-type domain. FAD is bound by residues R358, 388–391 (RDFS), and 429–432 (GLCS). NADP(+) is bound by residues T472, 528 to 529 (SR), and 534 to 538 (KIYVQ). W603 lines the FAD pocket.

Belongs to the NADPH-dependent diflavin oxidoreductase NDOR1 family. It in the N-terminal section; belongs to the flavodoxin family. The protein in the C-terminal section; belongs to the flavoprotein pyridine nucleotide cytochrome reductase family. Interacts with DRE2; as part of the cytosolic iron-sulfur (Fe-S) protein assembly (CIA) machinery. It depends on FAD as a cofactor. FMN serves as cofactor.

It is found in the cytoplasm. The protein resides in the mitochondrion. The enzyme catalyses 2 oxidized [2Fe-2S]-[protein] + NADPH = 2 reduced [2Fe-2S]-[protein] + NADP(+) + H(+). NADPH-dependent reductase which is a central component of the cytosolic iron-sulfur (Fe-S) protein assembly (CIA) machinery. Transfers electrons from NADPH via its FAD and FMN prosthetic groups to the [2Fe-2S] cluster of DRE2, another key component of the CIA machinery. In turn, this reduced cluster provides electrons for assembly of cytosolic iron-sulfur cluster proteins. Positively controls H(2)O(2)-induced cell death. The polypeptide is NADPH-dependent diflavin oxidoreductase 1 (Gibberella zeae (strain ATCC MYA-4620 / CBS 123657 / FGSC 9075 / NRRL 31084 / PH-1) (Wheat head blight fungus)).